The following is a 471-amino-acid chain: Abscisic acid 8'-hydroxylase 1 (471 aa).

Residues 1–21 (MGAFLLFVCVLAPFLLVCAVR) form a helical membrane-spanning segment. A heme-binding site is contributed by C415.

The protein belongs to the cytochrome P450 family. Heme serves as cofactor. In terms of tissue distribution, in seedlings and expanding leaves.

The protein localises to the membrane. It catalyses the reaction 2-cis-(+)-abscisate + reduced [NADPH--hemoprotein reductase] + O2 = (+)-8'-hydroxyabscisate + oxidized [NADPH--hemoprotein reductase] + H2O + H(+). It participates in plant hormone degradation; abscisic acid degradation. In terms of biological role, involved in the oxidative degradation of abscisic acid. The protein is Abscisic acid 8'-hydroxylase 1 (CYP707A5) of Oryza sativa subsp. indica (Rice).